The primary structure comprises 195 residues: Probable cobalt-precorrin-6B C(15)-methyltransferase (decarboxylating) (195 aa).

Residues Thr24, 48–52 (GCGTG), Asp72, and Ala101 each bind S-adenosyl-L-methionine.

This sequence belongs to the methyltransferase superfamily. Archaeal-type CbiT family.

The catalysed reaction is Co-precorrin-6B + S-adenosyl-L-methionine = Co-precorrin-7 + S-adenosyl-L-homocysteine + CO2. Its pathway is cofactor biosynthesis; adenosylcobalamin biosynthesis; cob(II)yrinate a,c-diamide from sirohydrochlorin (anaerobic route): step 8/10. Its function is as follows. Catalyzes the methylation of C-15 in cobalt-precorrin-6B followed by the decarboxylation of C-12 to form cobalt-precorrin-7. This Pyrobaculum calidifontis (strain DSM 21063 / JCM 11548 / VA1) protein is Probable cobalt-precorrin-6B C(15)-methyltransferase (decarboxylating).